A 216-amino-acid chain; its full sequence is Major fimbrial subunit (216 aa).

The N-terminal stretch at 1–20 (MKKTLLGSLILLAFAGNVQA) is a signal peptide. An intrachain disulfide couples Cys41 to Cys81.

It belongs to the fimbrial protein family.

The protein resides in the fimbrium. Its function is as follows. Mediates adherence to oropharyngeal epithelial cells. Helps the airway colonization process. The protein is Major fimbrial subunit (hifA) of Haemophilus influenzae.